The following is a 288-amino-acid chain: Alpha/beta hydrolase domain-containing protein 17B (288 aa).

Active-site charge relay system residues include serine 170, aspartate 235, and histidine 264. Position 282 is a phosphoserine (serine 282).

The protein belongs to the AB hydrolase superfamily. ABHD17 family. Palmitoylated on cysteine residues located in a cysteine cluster at the N-terminus which promotes membrane localization. Palmitoylation is required for post-synaptic localization and for depalmitoylating activity towards DLG4/PSD95.

It localises to the cell membrane. The protein localises to the recycling endosome membrane. Its subcellular location is the cell projection. The protein resides in the dendritic spine. It is found in the postsynaptic density membrane. It carries out the reaction S-hexadecanoyl-L-cysteinyl-[protein] + H2O = L-cysteinyl-[protein] + hexadecanoate + H(+). Inhibited by palmostatin-B. In terms of biological role, hydrolyzes fatty acids from S-acylated cysteine residues in proteins. Has depalmitoylating activity towards DLG4/PSD95. Has depalmitoylating activity towards GAP43. Has depalmitoylating activity towards MAP6. Has depalmitoylating activity towards NRAS. This Homo sapiens (Human) protein is Alpha/beta hydrolase domain-containing protein 17B.